Consider the following 147-residue polypeptide: Epididymal secretory protein E3-beta (147 aa).

Positions 1-25 (MASSLKIWGTLLALLCILCTLLVQS) are cleaved as a signal peptide.

Epididymis.

It localises to the secreted. Functionally, possible function in sperm maturation. The protein is Epididymal secretory protein E3-beta (EDDM3B) of Homo sapiens (Human).